We begin with the raw amino-acid sequence, 347 residues long: Bombesin receptor-activated protein C6orf89 (347 aa).

Residues 1 to 58 lie on the Cytoplasmic side of the membrane; it reads MDLAANEISIYDKLSETVDLVRQTGHQCGMSEKAIEKFIRQLLEKNEPQRPPPQYPLL. A helical membrane pass occupies residues 59-79; the sequence is IVVYKVLATLGLILLTAYFVI. Residues 80 to 347 are Extracellular-facing; that stretch reads QPFSPLAPEP…ICDGTAFSEL (268 aa).

As to quaternary structure, homodimer. Interacts with BRS3. Interacts (via N-terminus) with SIN3B. In terms of processing, glycosylated.

It is found in the golgi apparatus membrane. The protein localises to the midbody. Its subcellular location is the cytoplasm. The protein resides in the nucleus. It localises to the nucleolus. Its function is as follows. Exhibits histone deacetylase (HDAC) enhancer properties. May play a role in cell cycle progression and wound repair of bronchial epithelial cells. This chain is Bombesin receptor-activated protein C6orf89 (C6orf89), found in Homo sapiens (Human).